Consider the following 368-residue polypeptide: Mitogen-activated protein kinase 7 (368 aa).

In terms of domain architecture, Protein kinase spans 32-319; that stretch reads YVPIKPIGRG…VTDALLHPYM (288 aa). Residues 38–46 and K61 each bind ATP; that span reads IGRGAYGVV. Catalysis depends on D158, which acts as the Proton acceptor. T191 is modified (phosphothreonine). Residues 191-193 carry the TXY motif; it reads TEY. Residue Y193 is modified to Phosphotyrosine. Residue T196 is modified to Phosphothreonine.

It belongs to the protein kinase superfamily. CMGC Ser/Thr protein kinase family. MAP kinase subfamily. As to quaternary structure, interacts with MKK3. Mg(2+) serves as cofactor. Dually phosphorylated on Thr-191 and Tyr-193, which activates the enzyme.

It catalyses the reaction L-seryl-[protein] + ATP = O-phospho-L-seryl-[protein] + ADP + H(+). The enzyme catalyses L-threonyl-[protein] + ATP = O-phospho-L-threonyl-[protein] + ADP + H(+). Its activity is regulated as follows. Activated by threonine and tyrosine phosphorylation. Activated in response to hydrogen peroxide. Activation is triggered by MAPKKK17 and MAPKKK18 in a MKK3-dependent manner. MKK3-MPK7 module acts as a positive regulator of PR1 gene expression. This is Mitogen-activated protein kinase 7 (MPK7) from Arabidopsis thaliana (Mouse-ear cress).